We begin with the raw amino-acid sequence, 286 residues long: Haloalkane dehalogenase 2 (286 aa).

One can recognise an AB hydrolase-1 domain in the interval 35-134; sequence PPILLCHGNP…RVRGVVLGNT (100 aa). Asp-109 serves as the catalytic Nucleophile. Asp-238 acts as the Proton donor in catalysis. His-267 functions as the Proton acceptor in the catalytic mechanism.

The protein belongs to the haloalkane dehalogenase family. Type 1 subfamily. As to quaternary structure, monomer.

The enzyme catalyses 1-haloalkane + H2O = a halide anion + a primary alcohol + H(+). Catalyzes hydrolytic cleavage of carbon-halogen bonds in halogenated aliphatic compounds, leading to the formation of the corresponding primary alcohols, halide ions and protons. This Mycobacterium bovis (strain ATCC BAA-935 / AF2122/97) protein is Haloalkane dehalogenase 2 (dhmA2).